A 361-amino-acid chain; its full sequence is MLFELARWLQQFESLFGLFNYLTFRSILAALTALFLSLWIGPVLIQKLSQFKGGQPIRQDGPKMHFSKAGTPTMGGSLILMTVTLSVLLWGDLRNRYVWLVLVVMLAFGAIGWYDDWIKLARRDPNGLKSRWKYLLQSIFGLAAGLFLYFTADVPAAVTFYIPMFKSIALPLTSISFVAITYFWIVGFSNAVNLTDGLDGLAIMPTVLVACALGVFAYASGNTLFSSYLKIPTIPGAGDLIIICAAIAGAGLGFLWFNAYPAMVFMGDIGALALGAVLGTIAVIVRQELVLVVMGGVFVIETLSVIIQVTSFKLTGKRVFRMAPIHHHFELKGWPEPRVIVRFWIISVVLVLVGLATLKVR.

The next 10 helical transmembrane spans lie at 26–46 (SILAALTALFLSLWIGPVLIQ), 73–93 (TMGGSLILMTVTLSVLLWGDL), 98–118 (VWLVLVVMLAFGAIGWYDDWI), 139–159 (IFGLAAGLFLYFTADVPAAVT), 168–188 (IALPLTSISFVAITYFWIVGF), 200–220 (GLAIMPTVLVACALGVFAYAS), 237–257 (AGDLIIICAAIAGAGLGFLWF), 264–284 (VFMGDIGALALGAVLGTIAVI), 289–309 (LVLVVMGGVFVIETLSVIIQV), and 339–359 (VIVRFWIISVVLVLVGLATLK).

Belongs to the glycosyltransferase 4 family. MraY subfamily. Requires Mg(2+) as cofactor.

It localises to the cell inner membrane. It catalyses the reaction UDP-N-acetyl-alpha-D-muramoyl-L-alanyl-gamma-D-glutamyl-meso-2,6-diaminopimeloyl-D-alanyl-D-alanine + di-trans,octa-cis-undecaprenyl phosphate = di-trans,octa-cis-undecaprenyl diphospho-N-acetyl-alpha-D-muramoyl-L-alanyl-D-glutamyl-meso-2,6-diaminopimeloyl-D-alanyl-D-alanine + UMP. It functions in the pathway cell wall biogenesis; peptidoglycan biosynthesis. Its function is as follows. Catalyzes the initial step of the lipid cycle reactions in the biosynthesis of the cell wall peptidoglycan: transfers peptidoglycan precursor phospho-MurNAc-pentapeptide from UDP-MurNAc-pentapeptide onto the lipid carrier undecaprenyl phosphate, yielding undecaprenyl-pyrophosphoryl-MurNAc-pentapeptide, known as lipid I. In Xylella fastidiosa (strain 9a5c), this protein is Phospho-N-acetylmuramoyl-pentapeptide-transferase.